We begin with the raw amino-acid sequence, 129 residues long: Protein Wnt-6 (129 aa).

5 disulfide bridges follow: Cys-3/Cys-17, Cys-5/Cys-12, Cys-75/Cys-106, Cys-91/Cys-101, and Cys-128/Cys-129. Ser-9 carries the O-palmitoleoyl serine; by PORCN lipid modification. Asn-92 carries an N-linked (GlcNAc...) asparagine glycan.

It belongs to the Wnt family. Palmitoleoylation is required for efficient binding to frizzled receptors. Depalmitoleoylation leads to Wnt signaling pathway inhibition. At tailbud: dorsal, punctate; in adult: brain and heart.

The protein resides in the secreted. The protein localises to the extracellular space. It localises to the extracellular matrix. In terms of biological role, ligand for members of the frizzled family of seven transmembrane receptors. Probable developmental protein. May be a signaling molecule which affects the development of discrete regions of tissues. Is likely to signal over only few cell diameters. This chain is Protein Wnt-6 (wnt6), found in Xenopus laevis (African clawed frog).